Here is a 138-residue protein sequence, read N- to C-terminus: Large ribosomal subunit protein uL16 (138 aa).

Belongs to the universal ribosomal protein uL16 family. In terms of assembly, part of the 50S ribosomal subunit.

Binds 23S rRNA and is also seen to make contacts with the A and possibly P site tRNAs. The polypeptide is Large ribosomal subunit protein uL16 (Gluconacetobacter diazotrophicus (strain ATCC 49037 / DSM 5601 / CCUG 37298 / CIP 103539 / LMG 7603 / PAl5)).